Consider the following 63-residue polypeptide: Small ribosomal subunit protein bS21 (63 aa).

The span at 40–52 shows a compositional bias: basic and acidic residues; the sequence is KPSVKRKLKSEAA. Residues 40–63 form a disordered region; it reads KPSVKRKLKSEAARKRKNKRGRRY. The segment covering 53–63 has biased composition (basic residues); that stretch reads RKRKNKRGRRY.

Belongs to the bacterial ribosomal protein bS21 family.

The protein is Small ribosomal subunit protein bS21 of Limosilactobacillus reuteri (strain DSM 20016) (Lactobacillus reuteri).